The chain runs to 717 residues: Delta-1-pyrroline-5-carboxylate synthase (717 aa).

Residues 1 to 296 (METVDSTRAF…WASIGETDAR (296 aa)) are glutamate 5-kinase. Serine 60, aspartate 157, and asparagine 176 together coordinate substrate. Residues 196–197 (SD) and 236–242 (RGGMTAK) contribute to the ATP site. Positions 297–717 (EMAVAARACS…YSHKDLTQQG (421 aa)) are gamma-glutamyl phosphate reductase.

It in the N-terminal section; belongs to the glutamate 5-kinase family. The protein in the C-terminal section; belongs to the gamma-glutamyl phosphate reductase family. Expressed at high levels in leaves and is inducible in roots subjected to salt stress.

It carries out the reaction L-glutamate + ATP = L-glutamyl 5-phosphate + ADP. The catalysed reaction is L-glutamate 5-semialdehyde + phosphate + NADP(+) = L-glutamyl 5-phosphate + NADPH + H(+). The protein operates within amino-acid biosynthesis; L-proline biosynthesis; L-glutamate 5-semialdehyde from L-glutamate: step 1/2. Its pathway is amino-acid biosynthesis; L-proline biosynthesis; L-glutamate 5-semialdehyde from L-glutamate: step 2/2. Feedback regulated by proline. In terms of biological role, P5CS plays a key role in proline biosynthesis, leading to osmoregulation in plants. The chain is Delta-1-pyrroline-5-carboxylate synthase (PRO2) from Solanum lycopersicum (Tomato).